A 242-amino-acid polypeptide reads, in one-letter code: Dickkopf-like protein 1 (242 aa).

An N-terminal signal peptide occupies residues 1–30 (MGEASPPAPARRHLLVLLLLLSTLVIPSAA). 2 N-linked (GlcNAc...) asparagine glycosylation sites follow: asparagine 97 and asparagine 112.

In terms of assembly, interacts with SLXL1; Co-localize in seminiferous tubules. Interacts with SLY. In terms of processing, N-glycosylated during spermatogenesis. Not N-glycosylated in mature sperm. As to expression, more highly expressed in adult testis than in fetal testis. Exclusively expressed in the testis (at protein level). Intense expression in stages II, III and IV of spermatogenesis, whereas expression is lower in stage I.

The protein localises to the secreted. It is found in the cytoplasmic vesicle. The protein resides in the secretory vesicle. Its subcellular location is the acrosome. In terms of biological role, involved in fertilization by facilitating sperm penetration of the zona pellucida. May promote spermatocyte apoptosis, thereby limiting sperm production. In adults, may reduce testosterone synthesis in Leydig cells. Is not essential either for development or fertility. This is Dickkopf-like protein 1 from Homo sapiens (Human).